The sequence spans 280 residues: Shikimate dehydrogenase (NADP(+)) (280 aa).

Shikimate is bound by residues 15-17 (SMS) and threonine 62. The active-site Proton acceptor is lysine 66. Glutamate 78 contacts NADP(+). Shikimate-binding residues include asparagine 87 and aspartate 102. NADP(+) contacts are provided by residues 127–131 (GAGGA), 151–156 (NRTLEK), and isoleucine 219. Residue tyrosine 221 coordinates shikimate. An NADP(+)-binding site is contributed by glycine 242.

The protein belongs to the shikimate dehydrogenase family. As to quaternary structure, homodimer.

The enzyme catalyses shikimate + NADP(+) = 3-dehydroshikimate + NADPH + H(+). It participates in metabolic intermediate biosynthesis; chorismate biosynthesis; chorismate from D-erythrose 4-phosphate and phosphoenolpyruvate: step 4/7. In terms of biological role, involved in the biosynthesis of the chorismate, which leads to the biosynthesis of aromatic amino acids. Catalyzes the reversible NADPH linked reduction of 3-dehydroshikimate (DHSA) to yield shikimate (SA). The polypeptide is Shikimate dehydrogenase (NADP(+)) (Bacillus subtilis (strain 168)).